The chain runs to 1168 residues: DNA-directed RNA polymerase subunit beta (1168 aa).

Belongs to the RNA polymerase beta chain family. As to quaternary structure, the RNAP catalytic core consists of 2 alpha, 1 beta, 1 beta' and 1 omega subunit. When a sigma factor is associated with the core the holoenzyme is formed, which can initiate transcription.

The enzyme catalyses RNA(n) + a ribonucleoside 5'-triphosphate = RNA(n+1) + diphosphate. In terms of biological role, DNA-dependent RNA polymerase catalyzes the transcription of DNA into RNA using the four ribonucleoside triphosphates as substrates. This chain is DNA-directed RNA polymerase subunit beta, found in Rhodococcus opacus (strain B4).